The primary structure comprises 1087 residues: Ubiquitin-associated protein 2-like (1087 aa).

Met1 carries the post-translational modification N-acetylmethionine. The segment at 1 to 33 (MMTSVGTNRARGNWEQPQNQNQTQHKQRPQATA) is disordered. One can recognise a UBA domain in the interval 49–89 (DFEEKVKQLIDITGKNQDECVIALHDCNGDVNRAINVLLEG). The tract at residues 92–234 (DTHSWEMVGK…TGHFEPDDGT (143 aa)) is disordered. The segment covering 118-132 (EEGKENRDRDRDYSR) has biased composition (basic and acidic residues). Residues 133–145 (RRGGPPRRGRGAS) are compositionally biased toward basic residues. Residues Arg187 and Arg190 each carry the asymmetric dimethylarginine modification. Over residues 213–226 (NYGNSSGNTWNNTG) the composition is skewed to low complexity. A phosphoserine mark is found at Ser356 and Ser360. Over residues 377–389 (AQHSQSGSTTTSS) the composition is skewed to low complexity. Residues 377–420 (AQHSQSGSTTTSSWDMGSTTQSPSLVQYDLKNPSDSAVHSPFTK) are disordered. Positions 390–401 (WDMGSTTQSPSL) are enriched in polar residues. Ser410 and Ser416 each carry phosphoserine. A Phosphothreonine modification is found at Thr425. Phosphoserine is present on residues Ser439, Ser454, Ser467, Ser470, Ser471, and Ser477. Disordered stretches follow at residues 440 to 493 (PAVA…KKAS), 530 to 656 (SDYE…IPPL), and 669 to 794 (TNQH…LPPG). 2 stretches are compositionally biased toward low complexity: residues 474 to 485 (QSSSPQPAQQKL) and 534 to 569 (STPTTSASSSQAPSSLYTSTASESSSTISSNQSQES). Positions 570 to 656 (GYQSGPIQST…SPSTSSIPPL (87 aa)) are enriched in polar residues. 4 positions are modified to phosphoserine: Ser604, Ser605, Ser608, and Ser609. Low complexity predominate over residues 688–784 (TTTTQHSSTL…STRSSVATTS (97 aa)). Ser852 and Ser859 each carry phosphoserine. Positions 865–901 (FGRGDASSPAPATTLAQPQQNQTQTHHTTQQTFLNPA) are disordered. Low complexity predominate over residues 873–896 (PAPATTLAQPQQNQTQTHHTTQQT). An omega-N-methylarginine mark is found at Ser962 and Val969. N6-acetyllysine is present on residues Val969 and Thr976. A disordered region spans residues 1040-1087 (QQPHSQILHHHLQQDGQTGSGQRSQTSSIPQKPQTNKSAYNSYSWGAN). The span at 1053–1067 (QDGQTGSGQRSQTSS) shows a compositional bias: low complexity. The span at 1068–1087 (IPQKPQTNKSAYNSYSWGAN) shows a compositional bias: polar residues.

Interacts with BMI1. Part of a complex consisting of UBAP2L, BMI1 and RNF2. Interacts with G3BP1 (via NTF2 domain); promoting stress granule formation. Post-translationally, acetylated. In terms of tissue distribution, ubiquitous.

The protein localises to the nucleus. Its subcellular location is the chromosome. It is found in the cytoplasm. The protein resides in the stress granule. In terms of biological role, recruits the ubiquitination machinery to RNA polymerase II for polyubiquitination, removal and degradation, when the transcription-coupled nucleotide excision repair (TC-NER) machinery fails to resolve DNA damage. Plays an important role in the activity of long-term repopulating hematopoietic stem cells (LT-HSCs). Is a regulator of stress granule assembly, required for their efficient formation. Required for proper brain development and neocortex lamination. In Homo sapiens (Human), this protein is Ubiquitin-associated protein 2-like.